Reading from the N-terminus, the 619-residue chain is E3 ubiquitin-protein ligase complex SLX5-SLX8 subunit SLX5 (619 aa).

The segment at 1–23 is disordered; the sequence is MHSDTNGRTKSNNSPSDNNPNET. Residues 11–21 show a composition bias toward low complexity; that stretch reads SNNSPSDNNPN. Phosphoserine occurs at positions 14 and 29. The tract at residues 63–90 is disordered; it reads VRSDSRSRNSQRTHITASSERPDFQANN. The segment covering 70–90 has biased composition (polar residues); it reads RNSQRTHITASSERPDFQANN. An EUC1 interaction domain region spans residues 201–335; it reads SRRQLLRRSA…ALFTEFRNQL (135 aa).

In terms of assembly, component of the heterodimeric SUMO-targeted ubiquitin ligase (STUbL) complex composed of SLX5 and SLX8. Interacts with sirtuin SIR2. Interacts with KAR9. Interacts with EUC1.

It is found in the nucleus. The protein resides in the chromosome. Its subcellular location is the centromere. It localises to the kinetochore. It catalyses the reaction S-ubiquitinyl-[E2 ubiquitin-conjugating enzyme]-L-cysteine + [acceptor protein]-L-lysine = [E2 ubiquitin-conjugating enzyme]-L-cysteine + N(6)-ubiquitinyl-[acceptor protein]-L-lysine.. The protein operates within protein modification; protein ubiquitination. In terms of biological role, component of the SUMO-targeted ubiquitin ligase (STUbL) complex SLX5/SLX8 that mediates ubiquitination and subsequent desumoylation of sumoylated proteins and proteins containing SUMO-like domains for their degradation. The STUbL complex SLX5/SLX8 stimulates ubiquitin conjugating enzymes, including UBC1, UBC4, UBC5 and UBC13-MMS2, and mediates the proteolytic down-regulation of sumoylated proteins. The STUbL complex SLX5/SLX8 is involved in ubiquitin-mediated degradation of histone variant CSE4, preventing mislocalization to euchromatin. The complex plays an essential role in maintenance of chromosome stability and links SUMO-dependent ubiquitination to a centromere-specific function during mitosis. The complex is involved in proteolysis of spindle positioning protein KAR9 and ensures correct spindle function by regulating levels of microtubule-associated proteins. During replication, the complex helps prevent DNA lesions via recombination and has a role in localizing the DNA damage protein DCD2. The complex especially ubiquitinates the nuclease YEN1 and prevents persistent accumulation of a fraction of YEN1 associated with sites of activity in late G2/M and helps maintain the balance between pro- and anti-crossover pathways during homologous recombination. It is also involved in ubiquitin-mediated degradation of DNA repair proteins RAD52 and RAD57. Along with SIR2, promotes silencing of genes at telomeric or ribosomal DNA (rDNA) loci. Finally, the complex is recruited to distinct genomic hotspots of non-H2B protein ubiquitination (ub-hotspots) by the sumoylated transcription factor-like protein EUC1 where it ubiquitinates EUC1 and presumably other targets. This chain is E3 ubiquitin-protein ligase complex SLX5-SLX8 subunit SLX5 (SLX5), found in Saccharomyces cerevisiae (strain ATCC 204508 / S288c) (Baker's yeast).